The primary structure comprises 428 residues: Serine--tRNA ligase (428 aa).

234–236 serves as a coordination point for L-serine; it reads TAE. Position 265-267 (265-267) interacts with ATP; that stretch reads RRE. Glutamate 288 contributes to the L-serine binding site. 352–355 is an ATP binding site; sequence EISS. L-serine is bound at residue serine 388.

The protein belongs to the class-II aminoacyl-tRNA synthetase family. Type-1 seryl-tRNA synthetase subfamily. As to quaternary structure, homodimer. The tRNA molecule binds across the dimer.

The protein localises to the cytoplasm. The catalysed reaction is tRNA(Ser) + L-serine + ATP = L-seryl-tRNA(Ser) + AMP + diphosphate + H(+). It carries out the reaction tRNA(Sec) + L-serine + ATP = L-seryl-tRNA(Sec) + AMP + diphosphate + H(+). It participates in aminoacyl-tRNA biosynthesis; selenocysteinyl-tRNA(Sec) biosynthesis; L-seryl-tRNA(Sec) from L-serine and tRNA(Sec): step 1/1. Functionally, catalyzes the attachment of serine to tRNA(Ser). Is also able to aminoacylate tRNA(Sec) with serine, to form the misacylated tRNA L-seryl-tRNA(Sec), which will be further converted into selenocysteinyl-tRNA(Sec). The sequence is that of Serine--tRNA ligase from Synechococcus elongatus (strain ATCC 33912 / PCC 7942 / FACHB-805) (Anacystis nidulans R2).